Reading from the N-terminus, the 371-residue chain is T-cell acute lymphocytic leukemia protein 1 (371 aa).

The segment at 1 to 71 is disordered; that stretch reads MMEKRQPELC…DVPLQNSSNG (71 aa). The segment covering 34 to 57 has biased composition (basic and acidic residues); that stretch reads GCKEDEESKREEGDKEGGGRFKGD. A bHLH domain is found at 204–256; sequence VRRIFTNSRERWRQQNVNGAFAELRKLIPTHPPDKKLSKNEILRLAMKYISFL. The disordered stretch occupies residues 263–371; the sequence is QDGGRNVSST…GRPLDGSSRR (109 aa). Over residues 293-305 the composition is skewed to basic and acidic residues; it reads HQDRVVGLARDDI. Over residues 321–335 the composition is skewed to acidic residues; it reads GDADGSPESFMEDQD.

In terms of tissue distribution, expressed in the main hemopoietic organs in adults, namely the kidney and the spleen. Also expressed in the liver, brain, gill and gonads.

It is found in the nucleus. Its function is as follows. Transcription factor that plays a pivotal role in hemopoietic and endothelial development. The chain is T-cell acute lymphocytic leukemia protein 1 from Takifugu rubripes (Japanese pufferfish).